Here is a 711-residue protein sequence, read N- to C-terminus: Polyribonucleotide nucleotidyltransferase (711 aa).

2 residues coordinate Mg(2+): Asp486 and Asp492. The KH domain maps to 553-612 (PRIHTIKINPDKIKDVIGKGGSVIRALTEETGTTIEIEDDGTVKIAATDGEKAKNAIRRI). The region spanning 622–690 (GRVYNGKVTR…RQGRIRLSIK (69 aa)) is the S1 motif domain. The tract at residues 689–711 (IKEATEQSQPAAAPEAPAAEQGE) is disordered. Over residues 694-711 (EQSQPAAAPEAPAAEQGE) the composition is skewed to low complexity.

It belongs to the polyribonucleotide nucleotidyltransferase family. In terms of assembly, component of the RNA degradosome, which is a multiprotein complex involved in RNA processing and mRNA degradation. Mg(2+) serves as cofactor.

The protein localises to the cytoplasm. It carries out the reaction RNA(n+1) + phosphate = RNA(n) + a ribonucleoside 5'-diphosphate. Its function is as follows. Involved in mRNA degradation. Catalyzes the phosphorolysis of single-stranded polyribonucleotides processively in the 3'- to 5'-direction. The sequence is that of Polyribonucleotide nucleotidyltransferase from Escherichia fergusonii (strain ATCC 35469 / DSM 13698 / CCUG 18766 / IAM 14443 / JCM 21226 / LMG 7866 / NBRC 102419 / NCTC 12128 / CDC 0568-73).